We begin with the raw amino-acid sequence, 455 residues long: Ectonucleoside triphosphate diphosphohydrolase 6 (455 aa).

Residues 1–12 (MRKIPNHGTLRM) lie on the Cytoplasmic side of the membrane. The helical; Signal-anchor for type II membrane protein transmembrane segment at 13–32 (TKVAYPLGLCVGLFIYVAYI) threads the bilayer. Residues 33 to 455 (KWHRASAAQA…SLKRQKVPAL (423 aa)) lie on the Lumenal side of the membrane. Asn192 is a glycosylation site (N-linked (GlcNAc...) asparagine). Catalysis depends on Glu196, which acts as the Proton acceptor. Residue Asn256 is glycosylated (N-linked (GlcNAc...) asparagine). 2 cysteine pairs are disulfide-bonded: Cys297/Cys327 and Cys387/Cys401.

The protein belongs to the GDA1/CD39 NTPase family. It depends on Ca(2+) as a cofactor. Requires Mg(2+) as cofactor. Might be cleaved at the N-terminus, retained in an intracellular membrane compartment and in addition be released into the extracellular medium. In terms of processing, N-glycosylated. Expressed in heart and brain.

It localises to the golgi apparatus membrane. The protein localises to the secreted. It is found in the cell membrane. The enzyme catalyses a ribonucleoside 5'-diphosphate + H2O = a ribonucleoside 5'-phosphate + phosphate + H(+). It catalyses the reaction IDP + H2O = IMP + phosphate + H(+). The catalysed reaction is GDP + H2O = GMP + phosphate + H(+). It carries out the reaction UDP + H2O = UMP + phosphate + H(+). Its function is as follows. Catalyzes the hydrolysis of nucleoside triphosphates and diphosphates in a calcium- or magnesium-dependent manner. Has a strong preference for nucleoside diphosphates, preferentially hydrolyzes GDP, IDP, and UDP, with slower hydrolysis of CDP, ITP, GTP, CTP, ADP, and UTP and virtually no hydrolysis of ATP. The membrane bound form might support glycosylation reactions in the Golgi apparatus and, when released from cells, might catalyze the hydrolysis of extracellular nucleotides. This Rattus norvegicus (Rat) protein is Ectonucleoside triphosphate diphosphohydrolase 6 (Entpd6).